A 716-amino-acid polypeptide reads, in one-letter code: Protein C-mannosyl-transferase DPY19L3 (716 aa).

Topologically, residues 1 to 43 are cytoplasmic; the sequence is MMSIRQRREIRATEVSEDFPAQEENVKLENKLPSGCTSRRLWK. A helical membrane pass occupies residues 44–64; sequence ILSLTIGGTIALCIGLLTSVY. The Lumenal segment spans residues 65 to 154; the sequence is LATLHENDLW…RVLPIQKYLE (90 aa). N118 carries N-linked (GlcNAc...) asparagine glycosylation. A helical membrane pass occupies residues 155–182; the sequence is PVYFYIYTLFGLQAIYVTALYITSWLLS. At 183–184 the chain is on the cytoplasmic side; the sequence is GT. Positions 185-197 form an intramembrane region, name=3; sequence WLSGLLAAFWYVT. At 198–215 the chain is on the cytoplasmic side; sequence NRIDTTRVEFTIPLRENW. Positions 216–230 form an intramembrane region, name=4; it reads ALPFFAIQIAAITYF. At 231–239 the chain is on the cytoplasmic side; the sequence is LRPNLQPLS. The helical transmembrane segment at 240–256 threads the bilayer; it reads ERLTLLAIFISTFLFSL. Over 257-262 the chain is Lumenal; the sequence is TWQFNQ. A helical membrane pass occupies residues 263-279; that stretch reads FMMLMQALVLFTLDSLD. The Cytoplasmic portion of the chain corresponds to 280-289; sequence MLPAVKATWL. A helical membrane pass occupies residues 290 to 306; the sequence is YGIQITSLLLVCILQFF. Topologically, residues 307–308 are lumenal; the sequence is NS. The helical transmembrane segment at 309-323 threads the bilayer; sequence MILGSLLISFNLSVF. Residues 324–338 are Cytoplasmic-facing; the sequence is IARKLQKNLKTGSFL. The helical transmembrane segment at 339–359 threads the bilayer; that stretch reads NRLGKLLLHLFMVLCLTLFLN. Residues 360–414 are Lumenal-facing; the sequence is NIIKKILNLKSDEHIFKFLKAKFGLGATRDFDANLYLCEEAFGLLPFNTFGRLSD. Residues 415–437 form a helical membrane-spanning segment; the sequence is TLLFYAYIFVLSITVIVAFVVAF. The Cytoplasmic segment spans residues 438–465; sequence HNLSDSTNQQSVGKMEKGTVDLKPETAY. The chain crosses the membrane as a helical span at residues 466–485; it reads NLIHTILFGFLALSTMRMKY. The Lumenal portion of the chain corresponds to 486 to 487; the sequence is LW. The helical transmembrane segment at 488–499 threads the bilayer; sequence TSHMCVFASFGL. Topologically, residues 500 to 522 are cytoplasmic; sequence CSPEIWELLLKSVHLYNPKRICI. Residues 523–539 form a helical membrane-spanning segment; sequence MRYSVPILILLYLCYKF. Residues 540-716 lie on the Lumenal side of the membrane; the sequence is WPGMMDELSE…FHVYKLSRNK (177 aa). A glycan (N-linked (GlcNAc...) asparagine) is linked at N704.

The protein belongs to the dpy-19 family. In terms of tissue distribution, widely expressed.

The protein resides in the endoplasmic reticulum membrane. It carries out the reaction L-tryptophyl-[protein] + a di-trans,poly-cis-dolichyl beta-D-mannosyl phosphate = C-alpha-D-mannosyl-L-tryptophyl-[protein] + a di-trans,poly-cis-dolichyl phosphate + H(+). The protein operates within protein modification; protein glycosylation. Functionally, C-mannosyltransferase that mediates C-mannosylation of tryptophan residues on target proteins. The reaction occurs on the luminal side of the endoplasmic reticulum and involves the transfer of a mannose unit from a dolichylphosphate mannose (Dol-P-Man) donor to an acceptor protein containing a WxxW or WxxC consensus sequence. C-mannosylates RSPO1, a Wnt signaling regulator, preferentially at the first Trp residue in the sequence WxxW. C-mannosylates the netrin receptor UNC5A, preferentially at the third tryptophan of WxxWxxWxxC sequence. In terms of biological role, has no C-mannosyltransferase activity. The sequence is that of Protein C-mannosyl-transferase DPY19L3 (DPY19L3) from Homo sapiens (Human).